We begin with the raw amino-acid sequence, 85 residues long: Conotoxin Im28.1 (85 aa).

Positions 1-21 are cleaved as a signal peptide; that stretch reads MPKLEMMLLVLLILPLCYIDA. Residues 22 to 40 constitute a propeptide that is removed on maturation; the sequence is VGPPPPWNMEDEIIEHWQK.

Belongs to the conotoxin D superfamily. Post-translationally, contains 5 disulfide bonds. In terms of tissue distribution, expressed by the venom duct.

Its subcellular location is the secreted. Its function is as follows. Probable neurotoxin. The sequence is that of Conotoxin Im28.1 from Conus imperialis (Imperial cone).